The primary structure comprises 193 residues: Potassium-transporting ATPase KdpC subunit (193 aa).

Residues 7-27 (PLVVLFVVLNAVTGLAYPAVM) traverse the membrane as a helical segment.

It belongs to the KdpC family. As to quaternary structure, the system is composed of three essential subunits: KdpA, KdpB and KdpC.

Its subcellular location is the cell inner membrane. Part of the high-affinity ATP-driven potassium transport (or Kdp) system, which catalyzes the hydrolysis of ATP coupled with the electrogenic transport of potassium into the cytoplasm. This subunit acts as a catalytic chaperone that increases the ATP-binding affinity of the ATP-hydrolyzing subunit KdpB by the formation of a transient KdpB/KdpC/ATP ternary complex. The sequence is that of Potassium-transporting ATPase KdpC subunit from Burkholderia cenocepacia (strain HI2424).